The sequence spans 315 residues: Heterodimeric geranylgeranyl pyrophosphate synthase small subunit 1, chloroplastic (315 aa).

Positions 124 and 130 each coordinate Mg(2+). Dimethylallyl diphosphate contacts are provided by Lys-228, Gln-265, and Lys-280.

The protein belongs to the FPP/GGPP synthase family. In terms of assembly, part of a heterodimeric geranyl(geranyl)diphosphate synthase. Mg(2+) is required as a cofactor. Mainly expressed in trichomes, and, to a lower extent, in roots, leaves, flowers and stems.

Its subcellular location is the plastid. It localises to the chloroplast thylakoid membrane. The protein resides in the chloroplast. Its function is as follows. Heterodimeric geranyl(geranyl)-diphosphate (GPP) synthase small subunit. The small subunit alone is inactive in vitro while the large subunit GGPPS1 catalyzes mainly the production of geranygeranyl-diphosphate in vitro. Upon association of the two subunits, the product profile changes and the production of gerany-diphosphate is strongly increased. In Cannabis sativa (Hemp), this protein is Heterodimeric geranylgeranyl pyrophosphate synthase small subunit 1, chloroplastic.